The sequence spans 216 residues: Flavin prenyltransferase UbiX (216 aa).

FMN-binding positions include 9-11 (GAS), Ser35, and Arg144. Dimethylallyl phosphate contacts are provided by Tyr174 and Arg190.

This sequence belongs to the UbiX/PAD1 family.

It carries out the reaction dimethylallyl phosphate + FMNH2 = prenylated FMNH2 + phosphate. Its function is as follows. Flavin prenyltransferase that catalyzes the synthesis of the prenylated FMN cofactor (prenyl-FMN) for 4-hydroxy-3-polyprenylbenzoic acid decarboxylase UbiD. The prenyltransferase is metal-independent and links a dimethylallyl moiety from dimethylallyl monophosphate (DMAP) to the flavin N5 and C6 atoms of FMN. The polypeptide is Flavin prenyltransferase UbiX (Streptomyces coelicolor (strain ATCC BAA-471 / A3(2) / M145)).